A 165-amino-acid chain; its full sequence is Polcalcin Jun o 2 (165 aa).

EF-hand domains lie at 22–57, 58–86, 91–126, and 127–162; these read QSVH…LGSD, VGEA…FVDL, ASVK…VGEP, and CTIE…EMTD. Ca(2+)-binding residues include D35, N37, D39, K41, E46, D71, D73, D75, Y77, E82, D104, D106, N108, S110, E115, D140, N142, D144, and E151.

The chain is Polcalcin Jun o 2 from Juniperus oxycedrus (Prickly juniper).